The following is a 284-amino-acid chain: Shikimate kinase (284 aa).

Position 85 to 95 (Pro85 to Ala95) interacts with ATP.

The protein belongs to the GHMP kinase family. Archaeal shikimate kinase subfamily.

It is found in the cytoplasm. It carries out the reaction shikimate + ATP = 3-phosphoshikimate + ADP + H(+). Its pathway is metabolic intermediate biosynthesis; chorismate biosynthesis; chorismate from D-erythrose 4-phosphate and phosphoenolpyruvate: step 5/7. The polypeptide is Shikimate kinase (Halobacterium salinarum (strain ATCC 29341 / DSM 671 / R1)).